Reading from the N-terminus, the 30-residue chain is Uperin-6.1 (30 aa).

Expressed by the skin dorsal glands.

The protein resides in the secreted. The sequence is that of Uperin-6.1 from Uperoleia inundata (Floodplain toadlet).